The sequence spans 163 residues: MMKPSNISISAVKLPQDLDDFKMLVQEYLQEFGMDLTFQNVDDELANPMRKYGPPHGIMLVARDEHGTALGCVAVHPFGGPGCCEMKRLYVRPESRGLKLGVLLVKEIIQYSEKLGYSSMVLDTLDTLLPAVRLYKSFGFKTTEPYYHNPIPNVVYMRLEMSK.

One can recognise an N-acetyltransferase domain in the interval 7 to 162 (ISISAVKLPQ…NVVYMRLEMS (156 aa)).

This sequence belongs to the acetyltransferase family.

Its subcellular location is the cytoplasm. The protein resides in the nucleus. This is an uncharacterized protein from Schizosaccharomyces pombe (strain 972 / ATCC 24843) (Fission yeast).